The primary structure comprises 807 residues: Mechanosensitive cation channel TMEM63A (807 aa).

Residues 1–51 (MMDSPFLELWQSKAVSIREQLGLGDRPNDSYCYNSAKNSTVLQGVTFGGIP) are Extracellular-facing. Asn-38 carries an N-linked (GlcNAc...) asparagine glycan. The chain crosses the membrane as a helical span at residues 52–74 (TVLLIDVSCFLFLILVFSIIRRR). Residues 75–134 (FWDYGRIALVSEADSESRFQRLSSTSSSGQQDFENELGCCPWLTAIFRLHDDQILEWCGE) are Cytoplasmic-facing. A helical transmembrane segment spans residues 135-167 (DAIHYLSFQRHIIFLLVVVSFLSLCVILPVNLS). At 168–191 (GDLLDKDPYSFGRTTIANLQTDND) the chain is on the extracellular side. Residues 192 to 217 (LLWLHTIFAVIYLFLTVGFMRHHTQS) traverse the membrane as a helical segment. Residues 218–416 (IKYKEENLVR…CWKNLSIQGL (199 aa)) are Cytoplasmic-facing. Positions 219–414 (KYKEENLVRR…DICWKNLSIQ (196 aa)) are intracellular linker IL2; confers mechanosensitivity. The helical transmembrane segment at 417–444 (RWWLQWLGINFTLFLGLFFLTTPSIILS) threads the bilayer. Topologically, residues 445–462 (TMDKFNVTKPIHALNNPI) are extracellular. Residue Asn-450 is glycosylated (N-linked (GlcNAc...) asparagine). The chain crosses the membrane as a helical span at residues 463 to 490 (ISQFFPTLLLWSFSALLPSIVYYSTLLE). Residues 491 to 495 (SHWTK) lie on the Cytoplasmic side of the membrane. The helical transmembrane segment at 496–532 (SGENQIMMTKVYIFLIFMVLILPSLGLTSLDFFFRWL) threads the bilayer. Topologically, residues 533–554 (FDKTSSEASIRLECVFLPDQGA) are extracellular. The chain crosses the membrane as a helical span at residues 555 to 586 (FFVNYVIASAFIGNGMELLRLPGLILYTFRMI). The gating helix stretch occupies residues 555–586 (FFVNYVIASAFIGNGMELLRLPGLILYTFRMI). Residues 587–606 (MAKTAADRRNVKQNQAFQYE) are Cytoplasmic-facing. The chain crosses the membrane as a helical span at residues 607–624 (FGAMYAWMLCVFTVIVAY). At 625-628 (SITC) the chain is on the extracellular side. The helical transmembrane segment at 629 to 651 (PIIAPFGLIYILLKHMVDRHNLY) threads the bilayer. Topologically, residues 652 to 661 (FVYLPAKLEK) are cytoplasmic. A helical membrane pass occupies residues 662–689 (GIHFAAVNQALAAPILCLFWLYFFSFLR). The Extracellular segment spans residues 690 to 694 (LGMKA). A helical transmembrane segment spans residues 695-709 (PATLFTFLVLLLTIL). Over 710–807 (VCLAHTCFGC…GSVAAAPQEA (98 aa)) the chain is Cytoplasmic. Ser-739 carries the post-translational modification Phosphoserine.

This sequence belongs to the CSC1 (TC 1.A.17) family. As to quaternary structure, monomer. N-Glycosylated.

Its subcellular location is the lysosome membrane. It is found in the early endosome membrane. The protein localises to the cell membrane. The catalysed reaction is Ca(2+)(in) = Ca(2+)(out). Functionally, mechanosensitive cation channel with low conductance and high activation threshold. In contrast to TMEM63B, does not show phospholipid scramblase activity. Acts as a regulator of lysosomal morphology by mediating lysosomal mechanosensitivity. Important for the baby's first breath and respiration throughout life. Upon lung inflation conducts cation currents in alveolar type 1 and 2 cells triggering lamellar body exocytosis and surfactant secretion into airspace. Also acts as an osmosensitive cation channel preferentially activated by hypotonic stress. In Homo sapiens (Human), this protein is Mechanosensitive cation channel TMEM63A.